The sequence spans 155 residues: Ribonuclease H (155 aa).

An RNase H type-1 domain is found at 4–145; that stretch reads QQKVVEIYTD…ADALARKAIA (142 aa). The Mg(2+) site is built by Asp-13, Glu-51, Asp-73, and Asp-137.

The protein belongs to the RNase H family. Monomer. It depends on Mg(2+) as a cofactor.

The protein localises to the cytoplasm. The enzyme catalyses Endonucleolytic cleavage to 5'-phosphomonoester.. Its function is as follows. Endonuclease that specifically degrades the RNA of RNA-DNA hybrids. The sequence is that of Ribonuclease H from Bartonella tribocorum (strain CIP 105476 / IBS 506).